Consider the following 244-residue polypeptide: Ubiquinone/menaquinone biosynthesis C-methyltransferase UbiE (244 aa).

S-adenosyl-L-methionine is bound by residues T70, D91, and 117–118; that span reads DA.

Belongs to the class I-like SAM-binding methyltransferase superfamily. MenG/UbiE family.

The enzyme catalyses a 2-demethylmenaquinol + S-adenosyl-L-methionine = a menaquinol + S-adenosyl-L-homocysteine + H(+). The catalysed reaction is a 2-methoxy-6-(all-trans-polyprenyl)benzene-1,4-diol + S-adenosyl-L-methionine = a 5-methoxy-2-methyl-3-(all-trans-polyprenyl)benzene-1,4-diol + S-adenosyl-L-homocysteine + H(+). Its pathway is quinol/quinone metabolism; menaquinone biosynthesis; menaquinol from 1,4-dihydroxy-2-naphthoate: step 2/2. It functions in the pathway cofactor biosynthesis; ubiquinone biosynthesis. In terms of biological role, methyltransferase required for the conversion of demethylmenaquinol (DMKH2) to menaquinol (MKH2) and the conversion of 2-polyprenyl-6-methoxy-1,4-benzoquinol (DDMQH2) to 2-polyprenyl-3-methyl-6-methoxy-1,4-benzoquinol (DMQH2). This Nitrosospira multiformis (strain ATCC 25196 / NCIMB 11849 / C 71) protein is Ubiquinone/menaquinone biosynthesis C-methyltransferase UbiE.